The chain runs to 103 residues: Small ribosomal subunit protein uS10 (103 aa).

This sequence belongs to the universal ribosomal protein uS10 family. In terms of assembly, part of the 30S ribosomal subunit.

Its function is as follows. Involved in the binding of tRNA to the ribosomes. The sequence is that of Small ribosomal subunit protein uS10 from Borrelia recurrentis (strain A1).